Here is a 246-residue protein sequence, read N- to C-terminus: tRNA (guanine-N(7)-)-methyltransferase (246 aa).

Positions 1–23 (MIESSSPTPPALHEGAPADVSHP) are disordered. Residues glutamate 75, glutamate 100, aspartate 127, and aspartate 150 each coordinate S-adenosyl-L-methionine. The active site involves aspartate 150. A substrate-binding site is contributed by lysine 154. The tract at residues 156-161 (KHNKRR) is interaction with RNA. Substrate contacts are provided by residues aspartate 186 and 225 to 228 (TKFE).

It belongs to the class I-like SAM-binding methyltransferase superfamily. TrmB family.

It carries out the reaction guanosine(46) in tRNA + S-adenosyl-L-methionine = N(7)-methylguanosine(46) in tRNA + S-adenosyl-L-homocysteine. The protein operates within tRNA modification; N(7)-methylguanine-tRNA biosynthesis. Catalyzes the formation of N(7)-methylguanine at position 46 (m7G46) in tRNA. The sequence is that of tRNA (guanine-N(7)-)-methyltransferase from Polaromonas naphthalenivorans (strain CJ2).